Here is a 306-residue protein sequence, read N- to C-terminus: Ribosomal RNA small subunit methyltransferase H (306 aa).

Residues Gly-33–Tyr-35, Asp-51, Phe-78, Asp-96, and Gln-103 contribute to the S-adenosyl-L-methionine site.

The protein belongs to the methyltransferase superfamily. RsmH family.

It is found in the cytoplasm. It carries out the reaction cytidine(1402) in 16S rRNA + S-adenosyl-L-methionine = N(4)-methylcytidine(1402) in 16S rRNA + S-adenosyl-L-homocysteine + H(+). Functionally, specifically methylates the N4 position of cytidine in position 1402 (C1402) of 16S rRNA. The chain is Ribosomal RNA small subunit methyltransferase H from Rickettsia typhi (strain ATCC VR-144 / Wilmington).